The primary structure comprises 294 residues: Ribosomal protein L11 methyltransferase (294 aa).

The S-adenosyl-L-methionine site is built by threonine 144, glycine 165, aspartate 187, and asparagine 229.

Belongs to the methyltransferase superfamily. PrmA family.

Its subcellular location is the cytoplasm. It carries out the reaction L-lysyl-[protein] + 3 S-adenosyl-L-methionine = N(6),N(6),N(6)-trimethyl-L-lysyl-[protein] + 3 S-adenosyl-L-homocysteine + 3 H(+). Its function is as follows. Methylates ribosomal protein L11. In Pseudomonas paraeruginosa (strain DSM 24068 / PA7) (Pseudomonas aeruginosa (strain PA7)), this protein is Ribosomal protein L11 methyltransferase.